Here is a 366-residue protein sequence, read N- to C-terminus: N-acetyl-L-citrulline deacetylase (366 aa).

Co(2+) is bound by residues H72 and D103. E130 acts as the Proton donor/acceptor in catalysis. E155 contributes to the Co(2+) binding site.

The protein belongs to the peptidase M20A family. N-acetylcitrulline deacetylase subfamily. As to quaternary structure, forms homodimers in the crystal, but higher order oligomers may form in solution. Requires Co(2+) as cofactor.

The enzyme catalyses N(2)-acetyl-L-citrulline + H2O = L-citrulline + acetate. It catalyses the reaction N(2)-acetyl-L-ornithine + H2O = L-ornithine + acetate. The protein operates within amino-acid biosynthesis; L-arginine biosynthesis. In terms of biological role, catalyzes the deacetylation of N-acetyl-L-citrulline to produce L-citrulline. This is a step in an alternative arginine biosynthesis pathway. Is also able to catalyze the deacetylation of N-acetylornithine in vitro, with almost equal velocity. However, this reaction may be not relevant in vivo since Xanthomonas does not possess the canonical argF gene and cannot convert ornithine to citrulline via ArgF'. The polypeptide is N-acetyl-L-citrulline deacetylase (Xanthomonas campestris pv. campestris (strain ATCC 33913 / DSM 3586 / NCPPB 528 / LMG 568 / P 25)).